A 153-amino-acid polypeptide reads, in one-letter code: Aspartate carbamoyltransferase regulatory chain (153 aa).

Zn(2+) is bound by residues cysteine 109, cysteine 114, cysteine 138, and cysteine 141.

It belongs to the PyrI family. As to quaternary structure, contains catalytic and regulatory chains. It depends on Zn(2+) as a cofactor.

Functionally, involved in allosteric regulation of aspartate carbamoyltransferase. This chain is Aspartate carbamoyltransferase regulatory chain, found in Wigglesworthia glossinidia brevipalpis.